The chain runs to 248 residues: Adenosylcobinamide-GDP ribazoletransferase (248 aa).

7 helical membrane passes run 24-44 (EINL…IGAW), 70-90 (IIIT…GLFS), 106-126 (VGAN…ALFL), 134-154 (IGWL…LLFA), 168-188 (IFLG…LVAL), 189-209 (GAFF…FTII), and 228-248 (AGGQ…WGLI).

The protein belongs to the CobS family. The cofactor is Mg(2+).

The protein localises to the cell membrane. The enzyme catalyses alpha-ribazole + adenosylcob(III)inamide-GDP = adenosylcob(III)alamin + GMP + H(+). It carries out the reaction alpha-ribazole 5'-phosphate + adenosylcob(III)inamide-GDP = adenosylcob(III)alamin 5'-phosphate + GMP + H(+). It participates in cofactor biosynthesis; adenosylcobalamin biosynthesis; adenosylcobalamin from cob(II)yrinate a,c-diamide: step 7/7. Its function is as follows. Joins adenosylcobinamide-GDP and alpha-ribazole to generate adenosylcobalamin (Ado-cobalamin). Also synthesizes adenosylcobalamin 5'-phosphate from adenosylcobinamide-GDP and alpha-ribazole 5'-phosphate. The sequence is that of Adenosylcobinamide-GDP ribazoletransferase from Listeria monocytogenes serotype 4a (strain HCC23).